A 418-amino-acid polypeptide reads, in one-letter code: MDKFRIQGPTQLIGEVTIAGAKNSALPILFATLLAEEPVNIHNVPKLKDIDTAIQLISQLGAKVKYNKSVYVDASNIAVYCAPYDLVKTMRASIWALGPLVARFGQGQVSLPGGCAIGARPVDLHLDGLAKLGATITLEKGYVKAYIKGRLRGAHIVMDKVSVGATVTVMSAATLAQGITIIDNAALEPEIVDTANFLITLGANIIGAGSNQIIIDGVTSLGGGEYRVLPDRIETGTFLVAAAISRGHIVCHATRPNMLDAVIAKLRETGAKIETGEDWISLNIHGKRPKAITVRTAPYPGFPTDMQAQFSLLNLIAKGTSVITETIFENRFMHIPELMRMGVHAKIENNTIICHGVEKLSGAQVMATDLRASASLVLAGCIAEGVTIVDRIYHIDRGYDCIENKLRNLGANIERIYS.

22–23 (KN) lines the phosphoenolpyruvate pocket. Arginine 91 is a binding site for UDP-N-acetyl-alpha-D-glucosamine. The active-site Proton donor is cysteine 115. Cysteine 115 is subject to 2-(S-cysteinyl)pyruvic acid O-phosphothioketal. UDP-N-acetyl-alpha-D-glucosamine contacts are provided by residues 120–124 (RPVDL), 160–163 (KVSV), aspartate 305, and isoleucine 327.

The protein belongs to the EPSP synthase family. MurA subfamily.

It is found in the cytoplasm. It carries out the reaction phosphoenolpyruvate + UDP-N-acetyl-alpha-D-glucosamine = UDP-N-acetyl-3-O-(1-carboxyvinyl)-alpha-D-glucosamine + phosphate. It functions in the pathway cell wall biogenesis; peptidoglycan biosynthesis. Cell wall formation. Adds enolpyruvyl to UDP-N-acetylglucosamine. The sequence is that of UDP-N-acetylglucosamine 1-carboxyvinyltransferase from Baumannia cicadellinicola subsp. Homalodisca coagulata.